An 841-amino-acid chain; its full sequence is Formin-like protein 10 (841 aa).

An N-terminal signal peptide occupies residues 1 to 25 (MDGLCYVIFIIFSLLSCAFSPLSYA). Residues 102 to 122 (LIPAISAVLAAATLIALAFFF) form a helical membrane-spanning segment. Disordered stretches follow at residues 137–166 (SKSLASDISQSQQQTLPCPPPRNNNTQNKL), 254–297 (ISSH…RTVR), and 403–512 (KSSW…SKQR). Residues 139 to 152 (SLASDISQSQQQTL) are compositionally biased toward polar residues. Over residues 254–278 (ISSHSDSPAMSPSAAMSPPMNSTAP) the composition is skewed to low complexity. Over residues 279 to 293 (HWSTNQNTHSPSSPE) the composition is skewed to polar residues. Residues 426-444 (LPPPQRPPPAMPEPPPLVP) are compositionally biased toward pro residues. The FH2 domain occupies 469–841 (EGTTDRPKPK…KKMEVTSSLA (373 aa)). The span at 502 to 512 (YNSSNANSKQR) shows a compositional bias: polar residues.

Belongs to the formin-like family. Class-I subfamily.

It is found in the membrane. Might be involved in the organization and polarity of the actin cytoskeleton. This chain is Formin-like protein 10 (FH10), found in Arabidopsis thaliana (Mouse-ear cress).